Consider the following 205-residue polypeptide: Holliday junction branch migration complex subunit RuvA (205 aa).

The interval 1 to 64 (MIGKLKGILE…EEAIRLFGFV (64 aa)) is domain I. Positions 65-143 (AKAEQEWFCL…PFNDNALHFT (79 aa)) are domain II. The interval 144–149 (PQPHLE) is flexible linker. Positions 150-205 (VTHQPTNDALSALVKLGFERDQAARALALAMNALEGETVSSALLIRHSLKLLSPST) are domain III.

The protein belongs to the RuvA family. Homotetramer. Forms an RuvA(8)-RuvB(12)-Holliday junction (HJ) complex. HJ DNA is sandwiched between 2 RuvA tetramers; dsDNA enters through RuvA and exits via RuvB. An RuvB hexamer assembles on each DNA strand where it exits the tetramer. Each RuvB hexamer is contacted by two RuvA subunits (via domain III) on 2 adjacent RuvB subunits; this complex drives branch migration. In the full resolvosome a probable DNA-RuvA(4)-RuvB(12)-RuvC(2) complex forms which resolves the HJ.

It is found in the cytoplasm. In terms of biological role, the RuvA-RuvB-RuvC complex processes Holliday junction (HJ) DNA during genetic recombination and DNA repair, while the RuvA-RuvB complex plays an important role in the rescue of blocked DNA replication forks via replication fork reversal (RFR). RuvA specifically binds to HJ cruciform DNA, conferring on it an open structure. The RuvB hexamer acts as an ATP-dependent pump, pulling dsDNA into and through the RuvAB complex. HJ branch migration allows RuvC to scan DNA until it finds its consensus sequence, where it cleaves and resolves the cruciform DNA. The chain is Holliday junction branch migration complex subunit RuvA from Bartonella quintana (strain Toulouse) (Rochalimaea quintana).